Reading from the N-terminus, the 288-residue chain is Peptidyl-tRNA hydrolase, chloroplastic (288 aa).

Residues 1 to 55 (MKAVAFPAKIANLSFPSNCCSLFFRSPATFLSPALPCRKLTKGIRGLEGLMSQCL) constitute a chloroplast transit peptide. Y107 provides a ligand contact to tRNA. Catalysis depends on H112, which acts as the Proton acceptor. The tRNA site is built by F157, N159, and N205.

This sequence belongs to the PTH family. In terms of assembly, monomer.

It localises to the plastid. The protein resides in the chloroplast stroma. The enzyme catalyses an N-acyl-L-alpha-aminoacyl-tRNA + H2O = an N-acyl-L-amino acid + a tRNA + H(+). Its function is as follows. The natural substrate for this enzyme may be peptidyl-tRNAs which drop off the ribosome during protein synthesis. The protein is Peptidyl-tRNA hydrolase, chloroplastic of Arabidopsis thaliana (Mouse-ear cress).